The primary structure comprises 163 residues: D-aminoacyl-tRNA deacylase (163 aa).

The short motif at 141-142 (GP) is the Gly-cisPro motif, important for rejection of L-amino acids element.

It belongs to the DTD family. As to quaternary structure, homodimer.

It is found in the cytoplasm. It catalyses the reaction glycyl-tRNA(Ala) + H2O = tRNA(Ala) + glycine + H(+). The enzyme catalyses a D-aminoacyl-tRNA + H2O = a tRNA + a D-alpha-amino acid + H(+). Functionally, an aminoacyl-tRNA editing enzyme that deacylates mischarged D-aminoacyl-tRNAs. Also deacylates mischarged glycyl-tRNA(Ala), protecting cells against glycine mischarging by AlaRS. Acts via tRNA-based rather than protein-based catalysis; rejects L-amino acids rather than detecting D-amino acids in the active site. By recycling D-aminoacyl-tRNA to D-amino acids and free tRNA molecules, this enzyme counteracts the toxicity associated with the formation of D-aminoacyl-tRNA entities in vivo and helps enforce protein L-homochirality. This is D-aminoacyl-tRNA deacylase from Neisseria meningitidis serogroup B (strain ATCC BAA-335 / MC58).